The sequence spans 380 residues: All-trans-retinol dehydrogenase [NAD(+)] ADH4 (380 aa).

A Zn(2+)-binding site is contributed by cysteine 47. Histidine 48–threonine 49 contributes to the NAD(+) binding site. Residues histidine 69, cysteine 99, cysteine 102, cysteine 105, and cysteine 113 each coordinate Zn(2+). Serine 121 is subject to Phosphoserine. Cysteine 180 serves as a coordination point for Zn(2+). NAD(+) is bound by residues glycine 205–glycine 210, aspartate 229, and lysine 234. Phosphoserine is present on serine 278. NAD(+) is bound by residues isoleucine 298 to valine 300, threonine 323 to phenylalanine 325, and arginine 375.

Belongs to the zinc-containing alcohol dehydrogenase family. Class-II subfamily. Homodimer. Zn(2+) is required as a cofactor.

It localises to the cytoplasm. The catalysed reaction is all-trans-retinol + NAD(+) = all-trans-retinal + NADH + H(+). It catalyses the reaction 9-cis-retinol + NAD(+) = 9-cis-retinal + NADH + H(+). It carries out the reaction 20-oxo-(5Z,8Z,11Z,14Z)-eicosatetraenoate + NAD(+) + H2O = (5Z,8Z,11Z,14Z)-eicosatetraenedioate + NADH + 2 H(+). The enzyme catalyses 20-hydroxy-(5Z,8Z,11Z,14Z)-eicosatetraenoate + NAD(+) = 20-oxo-(5Z,8Z,11Z,14Z)-eicosatetraenoate + NADH + H(+). The catalysed reaction is 1,4-benzoquinone + NADH + H(+) = hydroquinone + NAD(+). Oxydation of 20-HETE is inhibited by low concentrations of N-heptylformamide. Oxydation of 20-HETE is a decreased by 55-65% by either all-trans-retinol or all-trans-retinoic acid. Strongly inhibited by omega-hydroxy fatty acids. Catalyzes the NAD-dependent oxidation of either all-trans-retinol or 9-cis-retinol. Also oxidizes long chain omega-hydroxy fatty acids, such as 20-HETE, producing both the intermediate aldehyde, 20-oxoarachidonate and the end product, a dicarboxylic acid, (5Z,8Z,11Z,14Z)-eicosatetraenedioate. Also catalyzes the reduction of benzoquinones. In Homo sapiens (Human), this protein is All-trans-retinol dehydrogenase [NAD(+)] ADH4.